The primary structure comprises 301 residues: tRNA uridine(34) hydroxylase (301 aa).

A Rhodanese domain is found at 120–214 (SAPDVAVIDT…YLEDVPEDQS (95 aa)). The active-site Cysteine persulfide intermediate is the Cys-174.

This sequence belongs to the TrhO family.

It carries out the reaction uridine(34) in tRNA + AH2 + O2 = 5-hydroxyuridine(34) in tRNA + A + H2O. Functionally, catalyzes oxygen-dependent 5-hydroxyuridine (ho5U) modification at position 34 in tRNAs. This is tRNA uridine(34) hydroxylase from Jannaschia sp. (strain CCS1).